The following is a 266-amino-acid chain: Undecaprenyl-diphosphatase (266 aa).

Transmembrane regions (helical) follow at residues 3-23, 41-61, 86-106, 108-128, 149-171, 184-204, 220-240, and 245-265; these read MSLLSIVLLGIVEGVTEFLPV, GTETFDIVIQLGAILAVVVLY, VLVGFLPSAVIGAVAYGAIKA, LNTPIIVAVALILGGIAILVI, FGVGLVQCLSMIPGVSRSGATIM, AEYSFFLAIPTMLGATTLALW, IGFVVSFIVAMLVIRWFLGVV, and FAPFAWYRIIAGTAALIWLLA.

Belongs to the UppP family.

Its subcellular location is the cell inner membrane. The catalysed reaction is di-trans,octa-cis-undecaprenyl diphosphate + H2O = di-trans,octa-cis-undecaprenyl phosphate + phosphate + H(+). In terms of biological role, catalyzes the dephosphorylation of undecaprenyl diphosphate (UPP). Confers resistance to bacitracin. This chain is Undecaprenyl-diphosphatase, found in Rhizorhabdus wittichii (strain DSM 6014 / CCUG 31198 / JCM 15750 / NBRC 105917 / EY 4224 / RW1) (Sphingomonas wittichii).